The sequence spans 1750 residues: Protein TIC 214 (1750 aa).

Transmembrane regions (helical) follow at residues 12–32 (KIINSVIVVGLYYGFMTALSI), 69–89 (FIMGQFIRLISIYYGPLYVAL), 97–117 (ILALPYLLIHLFWNTDKSFFA), 129–149 (LEIYCVFLNHFALQLLNSCIL), 177–197 (FAWFIGQLFILNCFELVLVWI), and 216–236 (IFVIFLNCIFGSLLFLLSIQC). Residues 260–277 (RERLQKEEERGVEKKEQS) are compositionally biased toward basic and acidic residues. Disordered stretches follow at residues 260 to 282 (RERLQKEEERGVEKKEQSTEEDP), 617 to 638 (ATTTNSKTNTTKDTNLETKKES), 718 to 738 (STDKKRGKTKKEEKRENKQRE), 1205 to 1225 (RNSRGNYRLSDSKKQNVPKPV), and 1419 to 1512 (ETDS…NKKE). Residues 617–629 (ATTTNSKTNTTKD) show a composition bias toward low complexity. The segment covering 727–738 (KKEEKRENKQRE) has biased composition (basic and acidic residues). Residues 1420-1512 (TDSKQKSETD…TKSDKKNKKE (93 aa)) are compositionally biased toward basic and acidic residues.

The protein belongs to the TIC214 family. As to quaternary structure, part of the Tic complex.

It localises to the plastid. It is found in the chloroplast inner membrane. In terms of biological role, involved in protein precursor import into chloroplasts. May be part of an intermediate translocation complex acting as a protein-conducting channel at the inner envelope. This Cuscuta reflexa (Southern Asian dodder) protein is Protein TIC 214.